The following is a 672-amino-acid chain: tRNA 5-methylaminomethyl-2-thiouridine biosynthesis bifunctional protein MnmC (672 aa).

The segment at 1–243 is tRNA (mnm(5)s(2)U34)-methyltransferase; that stretch reads MTSITHAELG…KREMIAGCME (243 aa). Residues 269–672 are FAD-dependent cmnm(5)s(2)U34 oxidoreductase; sequence IGGGIASAAL…LRKGKAITEL (404 aa).

It in the N-terminal section; belongs to the methyltransferase superfamily. tRNA (mnm(5)s(2)U34)-methyltransferase family. This sequence in the C-terminal section; belongs to the DAO family. The cofactor is FAD.

It is found in the cytoplasm. It carries out the reaction 5-aminomethyl-2-thiouridine(34) in tRNA + S-adenosyl-L-methionine = 5-methylaminomethyl-2-thiouridine(34) in tRNA + S-adenosyl-L-homocysteine + H(+). Catalyzes the last two steps in the biosynthesis of 5-methylaminomethyl-2-thiouridine (mnm(5)s(2)U) at the wobble position (U34) in tRNA. Catalyzes the FAD-dependent demodification of cmnm(5)s(2)U34 to nm(5)s(2)U34, followed by the transfer of a methyl group from S-adenosyl-L-methionine to nm(5)s(2)U34, to form mnm(5)s(2)U34. In Vibrio vulnificus (strain CMCP6), this protein is tRNA 5-methylaminomethyl-2-thiouridine biosynthesis bifunctional protein MnmC.